A 130-amino-acid polypeptide reads, in one-letter code: Small ribosomal subunit protein uS9 (130 aa).

Positions 105–130 (TRDSRMKERKKPGLKGARRAPQFSKR) are disordered. The span at 111–130 (KERKKPGLKGARRAPQFSKR) shows a compositional bias: basic residues.

It belongs to the universal ribosomal protein uS9 family.

This is Small ribosomal subunit protein uS9 from Listeria welshimeri serovar 6b (strain ATCC 35897 / DSM 20650 / CCUG 15529 / CIP 8149 / NCTC 11857 / SLCC 5334 / V8).